A 224-amino-acid polypeptide reads, in one-letter code: Transposase for insertion sequence element IS257 in transposon Tn4003 (224 aa).

Positions 33–52 form a DNA-binding region, H-T-H motif; it reads EILRGRGVNVHHSTVYRWVQ. The 150-residue stretch at 73–222 folds into the Integrase catalytic domain; that stretch reads WRIDETYIKI…SPCHEISIML (150 aa).

In terms of biological role, involved in the transposition of the insertion sequence. The sequence is that of Transposase for insertion sequence element IS257 in transposon Tn4003 from Staphylococcus aureus.